Reading from the N-terminus, the 121-residue chain is SPbeta prophage-derived uncharacterized protein YorW (121 aa).

In Bacillus subtilis (strain 168), this protein is SPbeta prophage-derived uncharacterized protein YorW (yorW).